The primary structure comprises 441 residues: Tubulin beta chain, nucleomorph (441 aa).

GTP is bound by residues Q11, E69, S138, G142, T143, G144, N204, and N226. A Mg(2+)-binding site is contributed by E69.

The protein belongs to the tubulin family. As to quaternary structure, dimer of alpha and beta chains. A typical microtubule is a hollow water-filled tube with an outer diameter of 25 nm and an inner diameter of 15 nM. Alpha-beta heterodimers associate head-to-tail to form protofilaments running lengthwise along the microtubule wall with the beta-tubulin subunit facing the microtubule plus end conferring a structural polarity. Microtubules usually have 13 protofilaments but different protofilament numbers can be found in some organisms and specialized cells. It depends on Mg(2+) as a cofactor.

In terms of biological role, tubulin is the major constituent of microtubules, a cylinder consisting of laterally associated linear protofilaments composed of alpha- and beta-tubulin heterodimers. Microtubules grow by the addition of GTP-tubulin dimers to the microtubule end, where a stabilizing cap forms. Below the cap, tubulin dimers are in GDP-bound state, owing to GTPase activity of alpha-tubulin. In Guillardia theta (Cryptophyte), this protein is Tubulin beta chain, nucleomorph (tubB).